Consider the following 484-residue polypeptide: Chromosomal replication initiator protein DnaA (484 aa).

Positions 1-83 (MQPPSQDWAS…LAWRTVWPGI (83 aa)) are domain I, interacts with DnaA modulators. The domain II stretch occupies residues 83–146 (IAEVKVSVRN…EKKAEGEDQN (64 aa)). The disordered stretch occupies residues 110-146 (GDQPRPLPKKPAKKKQSVPATPKSTSPEKKAEGEDQN). Residues 116 to 125 (LPKKPAKKKQ) are compositionally biased toward basic residues. The segment covering 135–146 (SPEKKAEGEDQN) has biased composition (basic and acidic residues). The segment at 147-364 (QFEERYNFDN…GALNRVVAYA (218 aa)) is domain III, AAA+ region. 4 residues coordinate ATP: G191, G193, K194, and T195. A domain IV, binds dsDNA region spans residues 365–484 (TLSNRPINMD…VRLLMRQFEG (120 aa)).

The protein belongs to the DnaA family. As to quaternary structure, oligomerizes as a right-handed, spiral filament on DNA at oriC.

Its subcellular location is the cytoplasm. Functionally, plays an essential role in the initiation and regulation of chromosomal replication. ATP-DnaA binds to the origin of replication (oriC) to initiate formation of the DNA replication initiation complex once per cell cycle. Binds the DnaA box (a 9 base pair repeat at the origin) and separates the double-stranded (ds)DNA. Forms a right-handed helical filament on oriC DNA; dsDNA binds to the exterior of the filament while single-stranded (ss)DNA is stabiized in the filament's interior. The ATP-DnaA-oriC complex binds and stabilizes one strand of the AT-rich DNA unwinding element (DUE), permitting loading of DNA polymerase. After initiation quickly degrades to an ADP-DnaA complex that is not apt for DNA replication. Binds acidic phospholipids. The chain is Chromosomal replication initiator protein DnaA from Zymomonas mobilis subsp. mobilis (strain ATCC 31821 / ZM4 / CP4).